The sequence spans 87 residues: Down syndrome critical region protein 10 (87 aa).

The polypeptide is Down syndrome critical region protein 10 (DSCR10) (Pan troglodytes (Chimpanzee)).